The following is a 481-amino-acid chain: Argininosuccinate lyase (481 aa).

Belongs to the lyase 1 family. Argininosuccinate lyase subfamily.

It is found in the cytoplasm. The catalysed reaction is 2-(N(omega)-L-arginino)succinate = fumarate + L-arginine. It participates in amino-acid biosynthesis; L-arginine biosynthesis; L-arginine from L-ornithine and carbamoyl phosphate: step 3/3. This is Argininosuccinate lyase from Methanococcus maripaludis (strain C7 / ATCC BAA-1331).